Here is a 309-residue protein sequence, read N- to C-terminus: NADH-quinone oxidoreductase subunit C (309 aa).

Positions 198 to 309 (LPGDEKAVPP…RTRKKKEDGE (112 aa)) are disordered. Over residues 220-230 (TKGDAKADVPK) the composition is skewed to basic and acidic residues. Low complexity predominate over residues 246-261 (DAAAKPVAEAAAPAAT).

The protein belongs to the complex I 30 kDa subunit family. As to quaternary structure, NDH-1 is composed of 14 different subunits. Subunits NuoB, C, D, E, F, and G constitute the peripheral sector of the complex.

It is found in the cell inner membrane. It catalyses the reaction a quinone + NADH + 5 H(+)(in) = a quinol + NAD(+) + 4 H(+)(out). NDH-1 shuttles electrons from NADH, via FMN and iron-sulfur (Fe-S) centers, to quinones in the respiratory chain. The immediate electron acceptor for the enzyme in this species is believed to be ubiquinone. Couples the redox reaction to proton translocation (for every two electrons transferred, four hydrogen ions are translocated across the cytoplasmic membrane), and thus conserves the redox energy in a proton gradient. The polypeptide is NADH-quinone oxidoreductase subunit C (Novosphingobium aromaticivorans (strain ATCC 700278 / DSM 12444 / CCUG 56034 / CIP 105152 / NBRC 16084 / F199)).